We begin with the raw amino-acid sequence, 156 residues long: Protein BUNDLE SHEATH DEFECTIVE 2, chloroplastic (156 aa).

Residues 1-41 (MNSAALNARTASVAPQPQACHACKCRQLLSRRVPPAQRQVE) constitute a chloroplast transit peptide. Cys78, Cys81, Cys89, Cys92, Cys133, Cys136, Cys144, and Cys147 together coordinate Zn(2+).

The protein belongs to the BSD2 chaperone family. In terms of assembly, interacts with the RuBisCo large subunit (RbcL) assembled as an intermediate complex made of eight RbcL and eight BSD2 subunits.

The protein resides in the plastid. The protein localises to the chloroplast stroma. Its function is as follows. Chloroplast chaperone required for RuBisCo biogenesis and translational regulation of the RuBisCo large subunit (RbcL). Stabilizes an end-state assembly intermediate of eight RbcL subunits until the small subunits (RBCSs) become available to produce a complete stable RuBisCo complex containing eight small and eight large subunits. This chain is Protein BUNDLE SHEATH DEFECTIVE 2, chloroplastic, found in Chlamydomonas reinhardtii (Chlamydomonas smithii).